The chain runs to 247 residues: UPF0246 protein LCABL_22600 (247 aa).

The protein belongs to the UPF0246 family.

The polypeptide is UPF0246 protein LCABL_22600 (Lacticaseibacillus casei (strain BL23) (Lactobacillus casei)).